A 136-amino-acid polypeptide reads, in one-letter code: Transcription antitermination protein NusB (136 aa).

This sequence belongs to the NusB family.

In terms of biological role, involved in transcription antitermination. Required for transcription of ribosomal RNA (rRNA) genes. Binds specifically to the boxA antiterminator sequence of the ribosomal RNA (rrn) operons. This Treponema denticola (strain ATCC 35405 / DSM 14222 / CIP 103919 / JCM 8153 / KCTC 15104) protein is Transcription antitermination protein NusB.